The chain runs to 240 residues: Phosphoribosylaminoimidazole-succinocarboxamide synthase (240 aa).

It belongs to the SAICAR synthetase family.

The enzyme catalyses 5-amino-1-(5-phospho-D-ribosyl)imidazole-4-carboxylate + L-aspartate + ATP = (2S)-2-[5-amino-1-(5-phospho-beta-D-ribosyl)imidazole-4-carboxamido]succinate + ADP + phosphate + 2 H(+). The protein operates within purine metabolism; IMP biosynthesis via de novo pathway; 5-amino-1-(5-phospho-D-ribosyl)imidazole-4-carboxamide from 5-amino-1-(5-phospho-D-ribosyl)imidazole-4-carboxylate: step 1/2. The sequence is that of Phosphoribosylaminoimidazole-succinocarboxamide synthase from Wolbachia sp. subsp. Brugia malayi (strain TRS).